Here is a 363-residue protein sequence, read N- to C-terminus: Protein-glutamate methylesterase/protein-glutamine glutaminase of group 3 operon (363 aa).

Residues 7–124 enclose the Response regulatory domain; that stretch reads RVLIVDDSAS…RQALLECSTR (118 aa). 4-aspartylphosphate is present on Asp58. The 192-residue stretch at 166–357 folds into the CheB-type methylesterase domain; it reads PTTERIVCIG…REIMLWYQAG (192 aa). Active-site residues include Ser177, His203, and Asp299.

Belongs to the CheB family. Post-translationally, phosphorylated by CheA. Phosphorylation of the N-terminal regulatory domain activates the methylesterase activity.

The protein resides in the cytoplasm. The catalysed reaction is [protein]-L-glutamate 5-O-methyl ester + H2O = L-glutamyl-[protein] + methanol + H(+). It carries out the reaction L-glutaminyl-[protein] + H2O = L-glutamyl-[protein] + NH4(+). In terms of biological role, involved in chemotaxis. Part of a chemotaxis signal transduction system that modulates chemotaxis in response to various stimuli. Catalyzes the demethylation of specific methylglutamate residues introduced into the chemoreceptors (methyl-accepting chemotaxis proteins or MCP) by CheR. Also mediates the irreversible deamidation of specific glutamine residues to glutamic acid. The polypeptide is Protein-glutamate methylesterase/protein-glutamine glutaminase of group 3 operon (Bradyrhizobium diazoefficiens (strain JCM 10833 / BCRC 13528 / IAM 13628 / NBRC 14792 / USDA 110)).